The sequence spans 63 residues: Translational regulator CsrA (63 aa).

The protein belongs to the CsrA/RsmA family. In terms of assembly, homodimer; the beta-strands of each monomer intercalate to form a hydrophobic core, while the alpha-helices form wings that extend away from the core.

The protein localises to the cytoplasm. A key translational regulator that binds mRNA to regulate translation initiation and/or mRNA stability. Mediates global changes in gene expression, shifting from rapid growth to stress survival by linking envelope stress, the stringent response and the catabolite repression systems. Usually binds in the 5'-UTR; binding at or near the Shine-Dalgarno sequence prevents ribosome-binding, repressing translation, binding elsewhere in the 5'-UTR can activate translation and/or stabilize the mRNA. Its function is antagonized by small RNA(s). The protein is Translational regulator CsrA of Alteromonas mediterranea (strain DSM 17117 / CIP 110805 / LMG 28347 / Deep ecotype).